A 1161-amino-acid chain; its full sequence is DNA-directed RNA polymerase subunit beta (1161 aa).

It belongs to the RNA polymerase beta chain family. As to quaternary structure, the RNAP catalytic core consists of 2 alpha, 1 beta, 1 beta' and 1 omega subunit. When a sigma factor is associated with the core the holoenzyme is formed, which can initiate transcription.

It catalyses the reaction RNA(n) + a ribonucleoside 5'-triphosphate = RNA(n+1) + diphosphate. DNA-dependent RNA polymerase catalyzes the transcription of DNA into RNA using the four ribonucleoside triphosphates as substrates. The polypeptide is DNA-directed RNA polymerase subunit beta (Streptomyces avermitilis (strain ATCC 31267 / DSM 46492 / JCM 5070 / NBRC 14893 / NCIMB 12804 / NRRL 8165 / MA-4680)).